A 94-amino-acid chain; its full sequence is ESAT-6-like protein EsxN (94 aa).

It belongs to the WXG100 family. ESAT-6 subfamily.

The protein localises to the secreted. The protein is ESAT-6-like protein EsxN of Mycobacterium bovis (strain ATCC BAA-935 / AF2122/97).